The following is a 110-amino-acid chain: Iron-sulfur cluster assembly protein CyaY (110 aa).

It belongs to the frataxin family.

In terms of biological role, involved in iron-sulfur (Fe-S) cluster assembly. May act as a regulator of Fe-S biogenesis. The polypeptide is Iron-sulfur cluster assembly protein CyaY (Ectopseudomonas mendocina (strain ymp) (Pseudomonas mendocina)).